The primary structure comprises 151 residues: Deoxyuridine 5'-triphosphate nucleotidohydrolase (151 aa).

Substrate contacts are provided by residues 70-72, N83, 87-89, and K97; these read RSG and LID.

The protein belongs to the dUTPase family. Mg(2+) serves as cofactor.

It catalyses the reaction dUTP + H2O = dUMP + diphosphate + H(+). Its pathway is pyrimidine metabolism; dUMP biosynthesis; dUMP from dCTP (dUTP route): step 2/2. This enzyme is involved in nucleotide metabolism: it produces dUMP, the immediate precursor of thymidine nucleotides and it decreases the intracellular concentration of dUTP so that uracil cannot be incorporated into DNA. This is Deoxyuridine 5'-triphosphate nucleotidohydrolase from Idiomarina loihiensis (strain ATCC BAA-735 / DSM 15497 / L2-TR).